Consider the following 96-residue polypeptide: Protein RnfH (96 aa).

It belongs to the UPF0125 (RnfH) family.

This Citrobacter koseri (strain ATCC BAA-895 / CDC 4225-83 / SGSC4696) protein is Protein RnfH.